The chain runs to 238 residues: Leucyl/phenylalanyl-tRNA--protein transferase (238 aa).

It belongs to the L/F-transferase family.

The protein localises to the cytoplasm. It carries out the reaction N-terminal L-lysyl-[protein] + L-leucyl-tRNA(Leu) = N-terminal L-leucyl-L-lysyl-[protein] + tRNA(Leu) + H(+). It catalyses the reaction N-terminal L-arginyl-[protein] + L-leucyl-tRNA(Leu) = N-terminal L-leucyl-L-arginyl-[protein] + tRNA(Leu) + H(+). The catalysed reaction is L-phenylalanyl-tRNA(Phe) + an N-terminal L-alpha-aminoacyl-[protein] = an N-terminal L-phenylalanyl-L-alpha-aminoacyl-[protein] + tRNA(Phe). Functions in the N-end rule pathway of protein degradation where it conjugates Leu, Phe and, less efficiently, Met from aminoacyl-tRNAs to the N-termini of proteins containing an N-terminal arginine or lysine. This Psychromonas ingrahamii (strain DSM 17664 / CCUG 51855 / 37) protein is Leucyl/phenylalanyl-tRNA--protein transferase.